The following is a 410-amino-acid chain: Subtilisin-like protease CPC735_003880 (410 aa).

Positions 1 to 17 (MKLLKSSLLLLLPFVTA) are cleaved as a signal peptide. Positions 18-118 (NPIPSEDKDI…VTPDRKVYLA (101 aa)) are excised as a propeptide. An Inhibitor I9 domain is found at 31–118 (RYIVTLKDGI…VTPDRKVYLA (88 aa)). One can recognise a Peptidase S8 domain in the interval 127–410 (GYNLGHMSSK…IQEMNETVIA (284 aa)). The active-site Charge relay system is the Asp159. A glycan (N-linked (GlcNAc...) asparagine) is linked at Asn182. His191 functions as the Charge relay system in the catalytic mechanism. N-linked (GlcNAc...) asparagine glycans are attached at residues Asn238, Asn251, and Asn338. Ser347 (charge relay system) is an active-site residue. A glycan (N-linked (GlcNAc...) asparagine) is linked at Asn405.

This sequence belongs to the peptidase S8 family.

Its subcellular location is the secreted. Secreted subtilisin-like serine protease with keratinolytic activity that contributes to pathogenicity. This is Subtilisin-like protease CPC735_003880 from Coccidioides posadasii (strain C735) (Valley fever fungus).